A 280-amino-acid chain; its full sequence is Virginiamycin B lyase (280 aa).

His215 serves as a coordination point for substrate. Glu254 is a Mg(2+) binding site. His256 functions as the Proton acceptor in the catalytic mechanism. Position 271 (Glu271) interacts with Mg(2+).

It belongs to the Vgb family. Monomer. It depends on Mg(2+) as a cofactor.

Inactivates the type B streptogramin antibiotics by linearizing the lactone ring at the ester linkage, generating a free phenylglycine carboxylate and converting the threonyl moiety into 2-amino-butenoic acid. The sequence is that of Virginiamycin B lyase from Mycobacterium sp. (strain JLS).